Reading from the N-terminus, the 86-residue chain is Protein Tat (86 aa).

The interval 1–24 is interaction with human CREBBP; the sequence is MEPVDPRLEPWKHPGSQPKTACTN. The transactivation stretch occupies residues 1 to 48; the sequence is MEPVDPRLEPWKHPGSQPKTACTNCYCKKCCFHCQVCFITKALGISYG. Residues Cys22, Cys25, and Cys27 each coordinate Zn(2+). The segment at 22–37 is cysteine-rich; the sequence is CTNCYCKKCCFHCQVC. N6-acetyllysine; by host PCAF is present on Lys28. Residues Cys30, His33, Cys34, and Cys37 each contribute to the Zn(2+) site. Residues 38–48 form a core region; it reads FITKALGISYG. Residues 48–58 are compositionally biased toward basic residues; the sequence is GRKKRRQRRRA. A disordered region spans residues 48-86; sequence GRKKRRQRRRAPQGSQTHQVSLSKQPTSQSRGDPTGPKE. The Nuclear localization signal, RNA-binding (TAR), and protein transduction motif lies at 49–57; that stretch reads RKKRRQRRR. The tract at residues 49 to 86 is interaction with the host capping enzyme RNGTT; the sequence is RKKRRQRRRAPQGSQTHQVSLSKQPTSQSRGDPTGPKE. Lys50 and Lys51 each carry N6-acetyllysine; by host EP300 and GCN5L2. Asymmetric dimethylarginine; by host PRMT6 occurs at positions 52 and 53. A compositionally biased stretch (polar residues) spans 60-79; sequence QGSQTHQVSLSKQPTSQSRG. A Glycyl lysine isopeptide (Lys-Gly) (interchain with G-Cter in ubiquitin) cross-link involves residue Lys71. A Cell attachment site motif is present at residues 78-80; sequence RGD.

It belongs to the lentiviruses Tat family. In terms of assembly, interacts with host CCNT1. Associates with the P-TEFb complex composed at least of Tat, P-TEFb (CDK9 and CCNT1), TAR RNA, RNA Pol II. Recruits the HATs CREBBP, TAF1/TFIID, EP300, PCAF and GCN5L2. Interacts with host KAT5/Tip60; this interaction targets the latter to degradation. Interacts with the host deacetylase SIRT1. Interacts with host capping enzyme RNGTT; this interaction stimulates RNGTT. Binds to host KDR, and to the host integrins ITGAV/ITGB3 and ITGA5/ITGB1. Interacts with host KPNB1/importin beta-1 without previous binding to KPNA1/importin alpha-1. Interacts with EIF2AK2. Interacts with host nucleosome assembly protein NAP1L1; this interaction may be required for the transport of Tat within the nucleus, since the two proteins interact at the nuclear rim. Interacts with host C1QBP/SF2P32; this interaction involves lysine-acetylated Tat. Interacts with the host chemokine receptors CCR2, CCR3 and CXCR4. Interacts with host DPP4/CD26; this interaction may trigger an anti-proliferative effect. Interacts with host LDLR. Interacts with the host extracellular matrix metalloproteinase MMP1. Interacts with host PRMT6; this interaction mediates Tat's methylation. Interacts with, and is ubiquitinated by MDM2/Hdm2. Interacts with host PSMC3 and HTATIP2. Interacts with STAB1; this interaction may overcome SATB1-mediated repression of IL2 and IL2RA (interleukin) in T cells by binding to the same domain than HDAC1. Interacts (when acetylated) with human CDK13, thereby increasing HIV-1 mRNA splicing and promoting the production of the doubly spliced HIV-1 protein Nef. Interacts with host TBP; this interaction modulates the activity of transcriptional pre-initiation complex. Interacts with host RELA. Interacts with host PLSCR1; this interaction negatively regulates Tat transactivation activity by altering its subcellular distribution. Post-translationally, asymmetrical arginine methylation by host PRMT6 seems to diminish the transactivation capacity of Tat and affects the interaction with host CCNT1. In terms of processing, acetylation by EP300, CREBBP, GCN5L2/GCN5 and PCAF regulates the transactivation activity of Tat. EP300-mediated acetylation of Lys-50 promotes dissociation of Tat from the TAR RNA through the competitive binding to PCAF's bromodomain. In addition, the non-acetylated Tat's N-terminus can also interact with PCAF. PCAF-mediated acetylation of Lys-28 enhances Tat's binding to CCNT1. Lys-50 is deacetylated by SIRT1. Polyubiquitination by host MDM2 does not target Tat to degradation, but activates its transactivation function and fosters interaction with CCNT1 and TAR RNA. Post-translationally, phosphorylated by EIF2AK2 on serine and threonine residues adjacent to the basic region important for TAR RNA binding and function. Phosphorylation of Tat by EIF2AK2 is dependent on the prior activation of EIF2AK2 by dsRNA.

The protein localises to the host nucleus. Its subcellular location is the host nucleolus. The protein resides in the host cytoplasm. It is found in the secreted. In terms of biological role, transcriptional activator that increases RNA Pol II processivity, thereby increasing the level of full-length viral transcripts. Recognizes a hairpin structure at the 5'-LTR of the nascent viral mRNAs referred to as the transactivation responsive RNA element (TAR) and recruits the cyclin T1-CDK9 complex (P-TEFb complex) that will in turn hyperphosphorylate the RNA polymerase II to allow efficient elongation. The CDK9 component of P-TEFb and other Tat-activated kinases hyperphosphorylate the C-terminus of RNA Pol II that becomes stabilized and much more processive. Other factors such as HTATSF1/Tat-SF1, SUPT5H/SPT5, and HTATIP2 are also important for Tat's function. Besides its effect on RNA Pol II processivity, Tat induces chromatin remodeling of proviral genes by recruiting the histone acetyltransferases (HATs) CREBBP, EP300 and PCAF to the chromatin. This also contributes to the increase in proviral transcription rate, especially when the provirus integrates in transcriptionally silent region of the host genome. To ensure maximal activation of the LTR, Tat mediates nuclear translocation of NF-kappa-B by interacting with host RELA. Through its interaction with host TBP, Tat may also modulate transcription initiation. Tat can reactivate a latently infected cell by penetrating in it and transactivating its LTR promoter. In the cytoplasm, Tat is thought to act as a translational activator of HIV-1 mRNAs. Its function is as follows. Extracellular circulating Tat can be endocytosed by surrounding uninfected cells via the binding to several surface receptors such as CD26, CXCR4, heparan sulfate proteoglycans (HSPG) or LDLR. Neurons are rarely infected, but they internalize Tat via their LDLR. Through its interaction with nuclear HATs, Tat is potentially able to control the acetylation-dependent cellular gene expression. Modulates the expression of many cellular genes involved in cell survival, proliferation or in coding for cytokines or cytokine receptors. Tat plays a role in T-cell and neurons apoptosis. Tat induced neurotoxicity and apoptosis probably contribute to neuroAIDS. Circulating Tat also acts as a chemokine-like and/or growth factor-like molecule that binds to specific receptors on the surface of the cells, affecting many cellular pathways. In the vascular system, Tat binds to ITGAV/ITGB3 and ITGA5/ITGB1 integrins dimers at the surface of endothelial cells and competes with bFGF for heparin-binding sites, leading to an excess of soluble bFGF. The protein is Protein Tat of Human immunodeficiency virus type 1 group M subtype B (isolate PCV12) (HIV-1).